The sequence spans 427 residues: Trigger factor (427 aa).

A PPIase FKBP-type domain is found at 163 to 248 (GDTVILDFEG…LHEIKTKEVP (86 aa)).

Belongs to the FKBP-type PPIase family. Tig subfamily.

The protein localises to the cytoplasm. The catalysed reaction is [protein]-peptidylproline (omega=180) = [protein]-peptidylproline (omega=0). In terms of biological role, involved in protein export. Acts as a chaperone by maintaining the newly synthesized protein in an open conformation. Functions as a peptidyl-prolyl cis-trans isomerase. The protein is Trigger factor of Listeria welshimeri serovar 6b (strain ATCC 35897 / DSM 20650 / CCUG 15529 / CIP 8149 / NCTC 11857 / SLCC 5334 / V8).